Consider the following 426-residue polypeptide: Serine--tRNA ligase (426 aa).

233–235 is an L-serine binding site; sequence TAE. Position 264-266 (264-266) interacts with ATP; that stretch reads RSE. Position 287 (Glu-287) interacts with L-serine. 351–354 is a binding site for ATP; the sequence is EISS. An L-serine-binding site is contributed by Ser-387.

The protein belongs to the class-II aminoacyl-tRNA synthetase family. Type-1 seryl-tRNA synthetase subfamily. As to quaternary structure, homodimer. The tRNA molecule binds across the dimer.

Its subcellular location is the cytoplasm. The enzyme catalyses tRNA(Ser) + L-serine + ATP = L-seryl-tRNA(Ser) + AMP + diphosphate + H(+). The catalysed reaction is tRNA(Sec) + L-serine + ATP = L-seryl-tRNA(Sec) + AMP + diphosphate + H(+). It functions in the pathway aminoacyl-tRNA biosynthesis; selenocysteinyl-tRNA(Sec) biosynthesis; L-seryl-tRNA(Sec) from L-serine and tRNA(Sec): step 1/1. Catalyzes the attachment of serine to tRNA(Ser). Is also able to aminoacylate tRNA(Sec) with serine, to form the misacylated tRNA L-seryl-tRNA(Sec), which will be further converted into selenocysteinyl-tRNA(Sec). This Azotobacter vinelandii (strain DJ / ATCC BAA-1303) protein is Serine--tRNA ligase.